The primary structure comprises 521 residues: Ribonuclease Y (521 aa).

A helical transmembrane segment spans residues 10 to 30 (LIITAGVSIALAIVAFFLGYL). The 61-residue stretch at 210–270 (TVSVVTLPND…IRREIAKLTL (61 aa)) folds into the KH domain. Residues 336-430 (VLAHSIEVAN…IQAADSVSAA (95 aa)) form the HD domain.

Belongs to the RNase Y family.

The protein localises to the cell membrane. In terms of biological role, endoribonuclease that initiates mRNA decay. The polypeptide is Ribonuclease Y (Caldicellulosiruptor saccharolyticus (strain ATCC 43494 / DSM 8903 / Tp8T 6331)).